The primary structure comprises 93 residues: Pyrimidine/purine nucleoside phosphorylase (93 aa).

The protein belongs to the nucleoside phosphorylase PpnP family.

The catalysed reaction is a purine D-ribonucleoside + phosphate = a purine nucleobase + alpha-D-ribose 1-phosphate. It catalyses the reaction adenosine + phosphate = alpha-D-ribose 1-phosphate + adenine. The enzyme catalyses cytidine + phosphate = cytosine + alpha-D-ribose 1-phosphate. It carries out the reaction guanosine + phosphate = alpha-D-ribose 1-phosphate + guanine. The catalysed reaction is inosine + phosphate = alpha-D-ribose 1-phosphate + hypoxanthine. It catalyses the reaction thymidine + phosphate = 2-deoxy-alpha-D-ribose 1-phosphate + thymine. The enzyme catalyses uridine + phosphate = alpha-D-ribose 1-phosphate + uracil. It carries out the reaction xanthosine + phosphate = alpha-D-ribose 1-phosphate + xanthine. In terms of biological role, catalyzes the phosphorolysis of diverse nucleosides, yielding D-ribose 1-phosphate and the respective free bases. Can use uridine, adenosine, guanosine, cytidine, thymidine, inosine and xanthosine as substrates. Also catalyzes the reverse reactions. This Vibrio atlanticus (strain LGP32) (Vibrio splendidus (strain Mel32)) protein is Pyrimidine/purine nucleoside phosphorylase.